A 483-amino-acid chain; its full sequence is Regulatory protein ViaA (483 aa).

Belongs to the ViaA family. In terms of assembly, homodimer. Interacts with RavA.

The protein resides in the cytoplasm. In terms of biological role, component of the RavA-ViaA chaperone complex, which may act on the membrane to optimize the function of some of the respiratory chains. ViaA stimulates the ATPase activity of RavA. This Cronobacter sakazakii (strain ATCC BAA-894) (Enterobacter sakazakii) protein is Regulatory protein ViaA.